We begin with the raw amino-acid sequence, 165 residues long: Cyclic pyranopterin monophosphate synthase (165 aa).

Substrate contacts are provided by residues 76–78 and 119–120; these read LCH and ME. The active site involves D134.

This sequence belongs to the MoaC family. In terms of assembly, homohexamer; trimer of dimers.

The enzyme catalyses (8S)-3',8-cyclo-7,8-dihydroguanosine 5'-triphosphate = cyclic pyranopterin phosphate + diphosphate. Its pathway is cofactor biosynthesis; molybdopterin biosynthesis. Its function is as follows. Catalyzes the conversion of (8S)-3',8-cyclo-7,8-dihydroguanosine 5'-triphosphate to cyclic pyranopterin monophosphate (cPMP). The sequence is that of Cyclic pyranopterin monophosphate synthase from Photobacterium profundum (strain SS9).